The sequence spans 303 residues: Probable 5-dehydro-4-deoxyglucarate dehydratase (303 aa).

It belongs to the DapA family.

It carries out the reaction 5-dehydro-4-deoxy-D-glucarate + H(+) = 2,5-dioxopentanoate + CO2 + H2O. It participates in carbohydrate acid metabolism; D-glucarate degradation; 2,5-dioxopentanoate from D-glucarate: step 2/2. The polypeptide is Probable 5-dehydro-4-deoxyglucarate dehydratase (Delftia acidovorans (strain DSM 14801 / SPH-1)).